The following is a 185-amino-acid chain: NADH-ubiquinone oxidoreductase chain 6 (185 aa).

5 helical membrane-spanning segments follow: residues 4–24, 33–53, 54–74, 94–114, and 159–179; these read LTYY…IFII, ILYM…IGLG, IFSL…FLFI, LPLV…IYSN, and AFIL…PISI.

Belongs to the complex I subunit 6 family. As to quaternary structure, complex I is composed of 37 different subunits.

The protein resides in the mitochondrion membrane. It carries out the reaction a ubiquinone + NADH + 5 H(+)(in) = a ubiquinol + NAD(+) + 4 H(+)(out). Functionally, core subunit of the mitochondrial membrane respiratory chain NADH dehydrogenase (Complex I) that is believed to belong to the minimal assembly required for catalysis. Complex I functions in the transfer of electrons from NADH to the respiratory chain. The immediate electron acceptor for the enzyme is believed to be ubiquinone. This is NADH-ubiquinone oxidoreductase chain 6 (ND6) from Yarrowia lipolytica (strain CLIB 122 / E 150) (Yeast).